Consider the following 147-residue polypeptide: Sec-independent protein translocase protein TatB (147 aa).

Residues 2 to 22 traverse the membrane as a helical segment; it reads FDGIGFMELLLIGVLGLVVLG. The segment covering 85–97 has biased composition (polar residues); the sequence is QLKQAAQSVNRPY. The tract at residues 85-147 is disordered; sequence QLKQAAQSVN…DTRSNPKANG (63 aa). The span at 113–133 shows a compositional bias: low complexity; the sequence is ASQSVSTEASPSASSAPTSES.

This sequence belongs to the TatB family. In terms of assembly, the Tat system comprises two distinct complexes: a TatABC complex, containing multiple copies of TatA, TatB and TatC subunits, and a separate TatA complex, containing only TatA subunits. Substrates initially bind to the TatABC complex, which probably triggers association of the separate TatA complex to form the active translocon.

Its subcellular location is the cell inner membrane. In terms of biological role, part of the twin-arginine translocation (Tat) system that transports large folded proteins containing a characteristic twin-arginine motif in their signal peptide across membranes. Together with TatC, TatB is part of a receptor directly interacting with Tat signal peptides. TatB may form an oligomeric binding site that transiently accommodates folded Tat precursor proteins before their translocation. This is Sec-independent protein translocase protein TatB from Shewanella sp. (strain ANA-3).